The primary structure comprises 494 residues: Myocyte-specific enhancer factor 2A (494 aa).

The MADS-box domain maps to 3–57 (RKKIQITRIMDERNRQVTFTKRKFGLMKKAYELSVLCDCEIALIIFNSSNKLFQY). A DNA-binding region (mef2-type) is located at residues 58–86 (ASTDMDKVLLKYTEYNEPHESRTNSDIVE). Serine 59 is subject to Phosphoserine; by CK2. 2 positions are modified to phosphoserine: serine 98 and serine 108. Positions 171 to 181 (TLTDSSMLSPP) are enriched in low complexity. Residues 171–218 (TLTDSSMLSPPQTTLHRNVSPGAPQRPPSTGNAGGMLSTTDLIVPNGA) are disordered. Residue serine 233 is modified to Phosphoserine. The interval 238–268 (GATGANSLGKVMPTKSPPPPGGGNLGMNSRK) is disordered. Lysine 247 carries the post-translational modification N6-acetyllysine. At serine 253 the chain carries Phosphoserine. Positions 264–281 (MNSRKPDLRVVIPPSSKG) are required for interaction with MAPKs. Threonine 302 and threonine 309 each carry phosphothreonine; by MAPK7 and MAPK14. Serine 345 carries the post-translational modification Phosphoserine; by MAPK7. A compositionally biased stretch (polar residues) spans 380 to 392 (SNLSINTNQNINI). The segment at 380-494 (SNLSINTNQN…KRMRMDAWVT (115 aa)) is disordered. Lysine 393 is subject to N6-acetyllysine; alternate. Residue lysine 393 forms a Glycyl lysine isopeptide (Lys-Gly) (interchain with G-Cter in SUMO); alternate linkage. Residue serine 398 is modified to Phosphoserine; by CDK5. Threonine 405 bears the Phosphothreonine mark. Over residues 418 to 432 (QPPPPPPQPQPPQPQ) the composition is skewed to pro residues. At serine 440 the chain carries Phosphoserine. Residues 440–453 (SPVDSLSSSSSSYD) are compositionally biased toward low complexity. Composition is skewed to basic and acidic residues over residues 454-464 (GSDREDPRGDF) and 475-494 (NTEDRESPSVKRMRMDAWVT).

Binds DNA as a homo- or heterodimer. Dimerizes with MEF2D. Interacts with HDAC7. Interacts with PIAS1; the interaction enhances sumoylation. Interacts with HDAC4, HDAC9 and SLC2A4RG. Interacts (via the N-terminal) with MAPK7; the interaction results in the phosphorylation and transcriptional activity of MEF2A. Post-translationally, constitutive phosphorylation on Ser-398 promotes Lys-393 sumoylation thus preventing acetylation at this site. Dephosphorylation on Ser-398 by PPP3CA upon neuron depolarization promotes a switch from sumoylation to acetylation on residue Lys-393 leading to inhibition of dendrite claw differentiation. Phosphorylation on Thr-302 and Thr-309 are the main sites involved in p38 MAPK signaling and activate transcription. Phosphorylated on these sites by MAPK14/p38alpha and MAPK11/p38beta, but not by MAPK13/p38delta nor by MAPK12/p38gamma. Phosphorylation on Ser-398 by CDK5 induced by neurotoxicity inhibits MEF2A transcriptional activation leading to apoptosis of cortical neurons. Phosphorylation on Thr-302, Thr-309 and Ser-345 can be induced by EGF. In terms of processing, sumoylation on Lys-393 is enhanced by PIAS1 and represses transcriptional activity. Phosphorylation on Ser-398 is required for sumoylation. Has no effect on nuclear location nor on DNA binding. Sumoylated with SUMO1 and, to a lesser extent with SUMO2 and SUMO3. PIASx facilitates sumoylation in postsynaptic dendrites in the cerebellar cortex and promotes their morphogenesis. Acetylation on Lys-393 activates transcriptional activity. Acetylated by p300 on several sites in diffentiating myocytes. Acetylation on Lys-4 increases DNA binding and transactivation. Hyperacetylation by p300 leads to enhanced cardiac myocyte growth and heart failure. Post-translationally, proteolytically cleaved in cerebellar granule neurons on several sites by caspase 3 and caspase 7 following neurotoxicity. Preferentially cleaves the CDK5-mediated hyperphosphorylated form which leads to neuron apoptosis and transcriptional inactivation.

The protein resides in the nucleus. Transcriptional activator which binds specifically to the MEF2 element, 5'-YTA[AT](4)TAR-3', found in numerous muscle-specific genes. Also involved in the activation of numerous growth factor- and stress-induced genes. Mediates cellular functions not only in skeletal and cardiac muscle development, but also in neuronal differentiation and survival. Plays diverse roles in the control of cell growth, survival and apoptosis via p38 MAPK signaling in muscle-specific and/or growth factor-related transcription. In cerebellar granule neurons, phosphorylated and sumoylated MEF2A represses transcription of NUR77 promoting synaptic differentiation. Associates with chromatin to the ZNF16 promoter. The polypeptide is Myocyte-specific enhancer factor 2A (MEF2A) (Pongo abelii (Sumatran orangutan)).